Consider the following 157-residue polypeptide: 3-dehydroquinate dehydratase (157 aa).

Catalysis depends on Tyr24, which acts as the Proton acceptor. Positions 75, 81, and 88 each coordinate substrate. His101 (proton donor) is an active-site residue. Substrate is bound by residues 102-103 (LS) and Arg112.

The protein belongs to the type-II 3-dehydroquinase family. Homododecamer.

It carries out the reaction 3-dehydroquinate = 3-dehydroshikimate + H2O. It participates in metabolic intermediate biosynthesis; chorismate biosynthesis; chorismate from D-erythrose 4-phosphate and phosphoenolpyruvate: step 3/7. Its function is as follows. Catalyzes a trans-dehydration via an enolate intermediate. This Brucella melitensis biotype 1 (strain ATCC 23456 / CCUG 17765 / NCTC 10094 / 16M) protein is 3-dehydroquinate dehydratase.